A 239-amino-acid polypeptide reads, in one-letter code: Ribosomal RNA small subunit methyltransferase G (239 aa).

S-adenosyl-L-methionine is bound by residues Gly-78, Phe-83, 129–130, and Arg-148; that span reads AE.

Belongs to the methyltransferase superfamily. RNA methyltransferase RsmG family.

Its subcellular location is the cytoplasm. Its function is as follows. Specifically methylates the N7 position of a guanine in 16S rRNA. The polypeptide is Ribosomal RNA small subunit methyltransferase G (Clostridium botulinum (strain Kyoto / Type A2)).